Here is a 109-residue protein sequence, read N- to C-terminus: RNA-binding protein Hfq (109 aa).

The Sm domain maps to 9 to 68 (DPFLNALRKEKVNVSVYLVNGIKLQGQVEAFDQFCIVLRNTVNQMVYKHAISTIVPAKSV). The tract at residues 77–109 (PYHQNSNDEQDENVDDIHSDDLEIQENEGNIHE) is disordered.

It belongs to the Hfq family. Homohexamer.

In terms of biological role, RNA chaperone that binds small regulatory RNA (sRNAs) and mRNAs to facilitate mRNA translational regulation in response to envelope stress, environmental stress and changes in metabolite concentrations. Also binds with high specificity to tRNAs. This is RNA-binding protein Hfq from Francisella tularensis subsp. mediasiatica (strain FSC147).